A 304-amino-acid chain; its full sequence is MKKKILFWILGIIGILIIGGGAYAYSIYSSVSKTLDEVHKPLKRDKDSKGTEEVKISKSEPVSILLLGVDERGNEKGRSDSLILITLNPKNNSMKTVSIPRDTYTEIVGKGKSDKINHAYAFGGVDMSVATVEKFLNVPINYYIEVNMAGFKDIVDAVGGVDVNNDLEFKQDKHHFAKGNIHLTGDEALSFTRMRYEDPRGDFGRQMRQRQVMQAVIKKGATFSSLTSYGDVLTAIQKNVKTNLTQDQMFDMQKNYKNCLENSEDIQIPGDGHKAADGIWYYYVPEAAKQDLTNKLRAHLEVTK.

Residues 1–4 lie on the Cytoplasmic side of the membrane; that stretch reads MKKK. Residues 5–25 form a helical; Signal-anchor for type II membrane protein membrane-spanning segment; sequence ILFWILGIIGILIIGGGAYAY. Over 26–304 the chain is Extracellular; the sequence is SIYSSVSKTL…KLRAHLEVTK (279 aa).

This sequence belongs to the LytR/CpsA/Psr (LCP) family.

The protein resides in the cell membrane. It functions in the pathway cell wall biogenesis. Its function is as follows. May catalyze the final step in cell wall teichoic acid biosynthesis, the transfer of the anionic cell wall polymers (APs) from their lipid-linked precursor to the cell wall peptidoglycan (PG). The polypeptide is Polyisoprenyl-teichoic acid--peptidoglycan teichoic acid transferase TagU (Bacillus cereus (strain ATCC 14579 / DSM 31 / CCUG 7414 / JCM 2152 / NBRC 15305 / NCIMB 9373 / NCTC 2599 / NRRL B-3711)).